A 242-amino-acid polypeptide reads, in one-letter code: Stress response regulator protein 1 (242 aa).

Residues 118–236 (NFLLVDDNFI…FDHIITCIEK (119 aa)) enclose the Response regulatory domain. D169 carries the 4-aspartylphosphate modification.

In terms of biological role, required for stress adaptation, morphogenesis and virulence. This chain is Stress response regulator protein 1 (SRR1), found in Debaryomyces hansenii (strain ATCC 36239 / CBS 767 / BCRC 21394 / JCM 1990 / NBRC 0083 / IGC 2968) (Yeast).